The sequence spans 503 residues: Asparagine--tRNA ligase (503 aa).

Belongs to the class-II aminoacyl-tRNA synthetase family. Homodimer.

Its subcellular location is the cytoplasm. The catalysed reaction is tRNA(Asn) + L-asparagine + ATP = L-asparaginyl-tRNA(Asn) + AMP + diphosphate + H(+). In Aster yellows witches'-broom phytoplasma (strain AYWB), this protein is Asparagine--tRNA ligase.